The primary structure comprises 234 residues: Redox-sensing transcriptional repressor Rex (234 aa).

The segment at residues 17–56 (TYIRVLEELEAQNVLRASSGELARRAGVTPFQVRKDLTYF) is a DNA-binding region (H-T-H motif). Residue 91 to 96 (GMGRLG) participates in NAD(+) binding.

This sequence belongs to the transcriptional regulatory Rex family. Homodimer.

The protein resides in the cytoplasm. Modulates transcription in response to changes in cellular NADH/NAD(+) redox state. This is Redox-sensing transcriptional repressor Rex from Deinococcus radiodurans (strain ATCC 13939 / DSM 20539 / JCM 16871 / CCUG 27074 / LMG 4051 / NBRC 15346 / NCIMB 9279 / VKM B-1422 / R1).